Reading from the N-terminus, the 146-residue chain is Acidic phospholipase A2 S13-69J (146 aa).

A signal peptide spans 1-19 (MYPAHLLVLLAVCVSLLGA). Residues 20–27 (ASIPPQPL) constitute a propeptide that is removed on maturation. Intrachain disulfides connect Cys-38–Cys-98, Cys-54–Cys-145, Cys-56–Cys-72, Cys-71–Cys-126, Cys-78–Cys-119, Cys-87–Cys-112, and Cys-105–Cys-117. 3 residues coordinate Ca(2+): Tyr-55, Gly-57, and Gly-59. Residue His-75 is part of the active site. Asp-76 is a binding site for Ca(2+). Residue Asp-120 is part of the active site.

It belongs to the phospholipase A2 family. Group I subfamily. D49 sub-subfamily. Ca(2+) serves as cofactor. Expressed by the venom gland.

The protein resides in the secreted. The catalysed reaction is a 1,2-diacyl-sn-glycero-3-phosphocholine + H2O = a 1-acyl-sn-glycero-3-phosphocholine + a fatty acid + H(+). Functionally, snake venom phospholipase A2 (PLA2) that inhibits collagen-induced platelet aggregation. PLA2 catalyzes the calcium-dependent hydrolysis of the 2-acyl groups in 3-sn-phosphoglycerides. This Austrelaps superbus (Lowland copperhead snake) protein is Acidic phospholipase A2 S13-69J.